We begin with the raw amino-acid sequence, 1214 residues long: Brassinosteroid LRR receptor kinase BRL3 (1214 aa).

An N-terminal signal peptide occupies residues 1-29 (MAAVRVVAPAPSVLLLVAAAVVLLHLARA). The N-linked (GlcNAc...) asparagine glycan is linked to N61. Residues 69–76 (CAWAGVSC) carry the Cys pair 1 motif. LRR repeat units follow at residues 103-127 (LSAL…GSPR), 131-155 (PCAL…FLAS), 156-177 (CGGL…YPFP), 178-202 (PSLR…SLTG), 204-228 (HGIQ…PCTE), 230-250 (SVLD…FVAM), 252-276 (PANL…EFGG), 277-302 (CANL…LVDC), 303-325 (RRLE…TFLV), 327-351 (LQAL…LSIL), 353-375 (KTLV…SFGQ), 377-400 (RFLQ…VITN), 401-427 (ISSL…ASRC), 429-451 (LLEV…LCSS), 452-476 (LPSL…LSNC), 478-500 (NLES…ILFL), 502-525 (KLVD…CFNS), 526-549 (TALE…ITRC), 550-572 (VNLI…GFGN), 573-597 (LQNL…LGSC), 599-621 (NLIW…LAAQ), and 650-673 (GVLF…HLCS). N-linked (GlcNAc...) asparagine glycans are attached at residues N145, N163, N197, and N210. N254, N264, and N279 each carry an N-linked (GlcNAc...) asparagine glycan. 2 N-linked (GlcNAc...) asparagine glycosylation sites follow: N400 and N413. An N-linked (GlcNAc...) asparagine glycan is attached at N466. N-linked (GlcNAc...) asparagine glycans are attached at residues N512 and N524. N-linked (GlcNAc...) asparagine glycosylation occurs at N561. Y678 contributes to the brassinolide binding site. LRR repeat units lie at residues 689–712 (NGSM…SFGN), 713–736 (MTYL…AFTG), 738–760 (KGIG…GFGC), and 762–786 (HFLA…QLIT). The Cys pair 2 motif lies at 799-806 (CGIPLNPC). The chain crosses the membrane as a helical span at residues 829-849 (SVFLAVTLSVLILFSLLIIHY). One can recognise a Protein kinase domain in the interval 913-1196 (FCAETLIGSG…FQVDSGSNFL (284 aa)). ATP contacts are provided by residues 919–927 (IGSGGFGEV), K941, 987–989 (EYM), 993–996 (SLDF), 1039–1044 (DMKSSN), and D1057. The Proton acceptor role is filled by D1039.

Belongs to the protein kinase superfamily. Ser/Thr protein kinase family. As to expression, highly expressed in roots. Expressed at low levels in shoots.

It localises to the cell membrane. It carries out the reaction L-seryl-[protein] + ATP = O-phospho-L-seryl-[protein] + ADP + H(+). It catalyses the reaction L-threonyl-[protein] + ATP = O-phospho-L-threonyl-[protein] + ADP + H(+). Its function is as follows. May be involved in brassenosteroid (BR) perception in roots. This chain is Brassinosteroid LRR receptor kinase BRL3, found in Oryza sativa subsp. japonica (Rice).